A 194-amino-acid polypeptide reads, in one-letter code: 5-formyltetrahydrofolate cyclo-ligase (194 aa).

ATP is bound by residues 6–10 (KSQLR), 139–146 (GRGAGFYD), and Asp177.

This sequence belongs to the 5-formyltetrahydrofolate cyclo-ligase family.

It carries out the reaction (6S)-5-formyl-5,6,7,8-tetrahydrofolate + ATP = (6R)-5,10-methenyltetrahydrofolate + ADP + phosphate. The protein operates within one-carbon metabolism; tetrahydrofolate interconversion. Involved in the removal of 5-formyltetrahydrofolate. In vitro, it is a potent inhibitor of various folate-dependent enzymes in the C1 metabolism network and in vivo it might function as a folate storage. 5-formyltetrahydrofolate is also used as an antifolate rescue agent in cancer chemotherapy. Catalyzes the irreversible ATP-dependent transformation of 5-formyltetrahydrofolate (5-CHO-THF) to form 5,10-methenyltetrahydrofolate (5,10-CH=THF). The reverse reaction is catalyzed by the serine hydroxymethyltransferase GlyA (SHMT). This Mycolicibacterium smegmatis (strain ATCC 700084 / mc(2)155) (Mycobacterium smegmatis) protein is 5-formyltetrahydrofolate cyclo-ligase.